The primary structure comprises 534 residues: CTP synthase (534 aa).

Residues 1–267 (MTKYIFVTGG…DQIVCDHLKL (267 aa)) form an amidoligase domain region. Residue serine 13 coordinates CTP. Residue serine 13 coordinates UTP. 14 to 19 (SIGKGI) is an ATP binding site. Tyrosine 54 lines the L-glutamine pocket. Aspartate 71 is an ATP binding site. Positions 71 and 141 each coordinate Mg(2+). Residues 148–150 (DIE), 188–193 (KTKPTQ), and lysine 224 contribute to the CTP site. UTP-binding positions include 188–193 (KTKPTQ) and lysine 224. Residue 240-242 (RDV) coordinates ATP. Positions 292 to 534 (KIALVGKYVE…FVTAAIKNSN (243 aa)) constitute a Glutamine amidotransferase type-1 domain. Glycine 354 is a binding site for L-glutamine. The Nucleophile; for glutamine hydrolysis role is filled by cysteine 381. Residues 382 to 385 (LGMQ), glutamate 405, and arginine 463 each bind L-glutamine. Catalysis depends on residues histidine 508 and glutamate 510.

Belongs to the CTP synthase family. As to quaternary structure, homotetramer.

The catalysed reaction is UTP + L-glutamine + ATP + H2O = CTP + L-glutamate + ADP + phosphate + 2 H(+). It catalyses the reaction L-glutamine + H2O = L-glutamate + NH4(+). The enzyme catalyses UTP + NH4(+) + ATP = CTP + ADP + phosphate + 2 H(+). It functions in the pathway pyrimidine metabolism; CTP biosynthesis via de novo pathway; CTP from UDP: step 2/2. Allosterically activated by GTP, when glutamine is the substrate; GTP has no effect on the reaction when ammonia is the substrate. The allosteric effector GTP functions by stabilizing the protein conformation that binds the tetrahedral intermediate(s) formed during glutamine hydrolysis. Inhibited by the product CTP, via allosteric rather than competitive inhibition. Catalyzes the ATP-dependent amination of UTP to CTP with either L-glutamine or ammonia as the source of nitrogen. Regulates intracellular CTP levels through interactions with the four ribonucleotide triphosphates. The polypeptide is CTP synthase (Streptococcus pyogenes serotype M4 (strain MGAS10750)).